The following is a 2110-amino-acid chain: Tenascin (2110 aa).

A signal peptide spans 1-22 (MGAVTWLLPGIFLALFALTPEG). An N-linked (GlcNAc...) asparagine glycan is attached at N38. Residues S65, S70, and S72 each carry the phosphoserine modification. Residues 69–91 (ESASGEKDLTPTPESSGSFQEHT) form a disordered region. Residue S72 is glycosylated (O-linked (Xyl...) (chondroitin sulfate) serine). Residues 80 to 89 (TPESSGSFQE) are compositionally biased toward polar residues. Residues 118–142 (DVKELLSRLEELELLVSSLREQCTM) are a coiled coil. 2 N-linked (GlcNAc...) asparagine glycosylation sites follow: N166 and N184. The 12-residue stretch at 174–185 (CVCEPGWKGPNC) folds into the EGF-like 1; incomplete domain. 14 consecutive EGF-like domains span residues 186–216 (SEPD…GEDC), 217–247 (SQLA…GPDC), 248–279 (GLEV…GEDC), 280–310 (NEPL…GEDC), 311–341 (SELI…GEDC), 342–372 (GELT…GADC), 373–403 (SEKR…GADC), 404–434 (GDLQ…GEDC), 435–465 (SQRR…GFDC), 466–496 (SEMS…GEDC), 497–527 (RDRR…GPDC), 528–558 (AELS…GKDC), 559–589 (KEQR…GLDC), and 590–621 (GQRS…IDCS). Intrachain disulfides connect C190/C200, C194/C205, C207/C216, C221/C231, C225/C236, C238/C247, C252/C263, C256/C268, C270/C279, C284/C294, C288/C299, C301/C310, C315/C325, C319/C330, C332/C341, C346/C356, C350/C361, C363/C372, C377/C387, C381/C392, C394/C403, C408/C418, C412/C423, C425/C434, C439/C449, C443/C454, C456/C465, C470/C480, C474/C485, C487/C496, C501/C511, C505/C516, C518/C527, C532/C542, C536/C547, C549/C558, C563/C573, C567/C578, C580/C589, C594/C604, C598/C609, and C611/C620. N327 is a glycosylation site (N-linked (GlcNAc...) asparagine). 14 consecutive Fibronectin type-III domains span residues 625–715 (PPKD…LPAP), 716–804 (EGLK…TRLD), 805–894 (APSH…TGLD), 895–988 (APRN…IDAP), 989–1077 (KDLR…VPSL), 1078–1165 (ENLT…TGTT), 1167–1259 (NLGE…LPQL), 1260–1348 (GGLS…AREP), 1349–1440 (EIGN…ALPL), 1442–1530 (ENLT…EAEP), 1531–1620 (EVDN…TAMG), 1621–1710 (SPKE…ALDG), 1711–1797 (PSGL…TDLD), and 1798–1886 (SPRE…IGLL). A glycan (N-linked (GlcNAc...) asparagine) is linked at N788. A Phosphothreonine modification is found at T905. N-linked (GlcNAc...) asparagine glycosylation is found at N1018, N1079, N1093, N1119, N1184, N1210, N1275, N1301, N1354, N1364, N1394, and N1443. N1718 carries an N-linked (GlcNAc...) asparagine glycan. Positions 1884–2099 (GLLYPFPRDC…FAEMKLRPSN (216 aa)) constitute a Fibrinogen C-terminal domain. 2 N-linked (GlcNAc...) asparagine glycosylation sites follow: N1969 and N2071.

This sequence belongs to the tenascin family. As to quaternary structure, homohexamer; disulfide-linked. A homotrimer may be formed in the triple coiled-coil region and may be stabilized by disulfide rings at both ends. Two of such half-hexabrachions may be disulfide linked within the central globule. Interacts with CSPG4. Interacts (via the 3rd fibronectin type-III domain) with integrin ITGA9:ITGB1. N-glycosylated. As to expression, expressed in the corneal limbus, the periosteum and the rib molecular layer of the cerebellum, the matrix of kidney tubules, blood vessels, stomach and intestine (at protein level). In terms of tissue distribution, weakly expressed in the brain. Highly expressed in the thymus and moderately expressed in the brain.

The protein resides in the secreted. The protein localises to the extracellular space. It is found in the extracellular matrix. In terms of biological role, extracellular matrix protein implicated in guidance of migrating neurons as well as axons during development, synaptic plasticity as well as neuronal regeneration. Promotes neurite outgrowth when provided to neurons in culture. May play a role in supporting the growth of epithelial tumors. Ligand for integrins ITGA8:ITGB1, ITGA9:ITGB1, ITGAV:ITGB3 and ITGAV:ITGB6. In tumors, stimulates angiogenesis by elongation, migration and sprouting of endothelial cells. The protein is Tenascin of Mus musculus (Mouse).